A 208-amino-acid chain; its full sequence is uncharacterized protein (208 aa).

4Fe-4S ferredoxin-type domains are found at residues 59–88, 114–145, 147–176, and 174–203; these read GVLV…SVGT, GDLN…WQQK, GCIT…VNTE, and NTES…IIEW. Cys-68, Cys-71, Cys-74, Cys-78, Cys-123, Cys-126, Cys-131, Cys-135, Cys-156, Cys-159, Cys-162, Cys-166, Cys-183, Cys-186, Cys-189, and Cys-193 together coordinate [4Fe-4S] cluster.

This is an uncharacterized protein from Escherichia coli O157:H7.